Consider the following 123-residue polypeptide: Small ribosomal subunit protein uS12 (123 aa).

The disordered stretch occupies residues 1 to 24 (MPTINQLVRKGRTPQKVKSKVPAM). Over residues 9–19 (RKGRTPQKVKS) the composition is skewed to basic residues. Residue Asp-89 is modified to 3-methylthioaspartic acid.

Belongs to the universal ribosomal protein uS12 family. In terms of assembly, part of the 30S ribosomal subunit. Contacts proteins S8 and S17. May interact with IF1 in the 30S initiation complex.

Its function is as follows. With S4 and S5 plays an important role in translational accuracy. In terms of biological role, interacts with and stabilizes bases of the 16S rRNA that are involved in tRNA selection in the A site and with the mRNA backbone. Located at the interface of the 30S and 50S subunits, it traverses the body of the 30S subunit contacting proteins on the other side and probably holding the rRNA structure together. The combined cluster of proteins S8, S12 and S17 appears to hold together the shoulder and platform of the 30S subunit. The polypeptide is Small ribosomal subunit protein uS12 (Sphingopyxis alaskensis (strain DSM 13593 / LMG 18877 / RB2256) (Sphingomonas alaskensis)).